The primary structure comprises 182 residues: Adenine phosphoribosyltransferase (182 aa).

The protein belongs to the purine/pyrimidine phosphoribosyltransferase family. In terms of assembly, homodimer.

The protein localises to the cytoplasm. It catalyses the reaction AMP + diphosphate = 5-phospho-alpha-D-ribose 1-diphosphate + adenine. It participates in purine metabolism; AMP biosynthesis via salvage pathway; AMP from adenine: step 1/1. In terms of biological role, catalyzes a salvage reaction resulting in the formation of AMP, that is energically less costly than de novo synthesis. The protein is Adenine phosphoribosyltransferase of Pseudomonas syringae pv. syringae (strain B728a).